Here is a 114-residue protein sequence, read N- to C-terminus: Beta-microseminoprotein (114 aa).

The N-terminal stretch at M1 to A20 is a signal peptide. 5 cysteine pairs are disulfide-bonded: C22/C70, C38/C62, C57/C93, C60/C69, and C84/C107.

This sequence belongs to the beta-microseminoprotein family. In terms of assembly, homodimer; Interacts with PI16.

It is found in the secreted. In Papio anubis (Olive baboon), this protein is Beta-microseminoprotein (MSMB).